The following is a 256-amino-acid chain: MVADKSKKSKIEEKGEEENLEQIDAELVLSIEKLQEIQDDLEKINEKASDEVLEVEQKYNVIRKPVYDKRNEVIQSIPGFWMTAFLSHPALGDLLTEEDQKIFKYLNSLEVEDAKDVKSGYSITFHFTSNPFFEDAKLTKTFTFLEEGTTKITATPIKWKEGKGLPNGVNHDDKKGNKRALPEESFFTWFTDAQHKEDAGDEIHDEVADIIKEDLWSNPLTYFNNDADEEDFDGDDDGDEEGEEDDDDEEEEDGEE.

The stretch at 23–64 (IDAELVLSIEKLQEIQDDLEKINEKASDEVLEVEQKYNVIRK) forms a coiled coil. Residues 220–256 (LTYFNNDADEEDFDGDDDGDEEGEEDDDDEEEEDGEE) form a disordered region. Residues 226-256 (DADEEDFDGDDDGDEEGEEDDDDEEEEDGEE) are compositionally biased toward acidic residues.

Belongs to the nucleosome assembly protein (NAP) family. In terms of assembly, can form homomeric and heteromeric protein complexes with NRP2. Binds histones H2A and H2B and associates with chromatin in vivo. Ubiquitous.

It localises to the cytoplasm. The protein resides in the nucleus. Its function is as follows. Acts as a histone H2A/H2B chaperone in nucleosome assembly, playing a critical role for the correct expression of genes involved in root proliferation and patterning. Required with NRP2 for the maintenance of cell proliferation and differentiation in postembryonic root growth. Involved in both intramolecular and intermolecular somatic homologous recombination. In Arabidopsis thaliana (Mouse-ear cress), this protein is NAP1-related protein 1 (NRP1).